Consider the following 275-residue polypeptide: Urease accessory protein UreD (275 aa).

Belongs to the UreD family. UreD, UreF and UreG form a complex that acts as a GTP-hydrolysis-dependent molecular chaperone, activating the urease apoprotein by helping to assemble the nickel containing metallocenter of UreC. The UreE protein probably delivers the nickel.

It localises to the cytoplasm. Its function is as follows. Required for maturation of urease via the functional incorporation of the urease nickel metallocenter. The chain is Urease accessory protein UreD from Cereibacter sphaeroides (strain ATCC 17023 / DSM 158 / JCM 6121 / CCUG 31486 / LMG 2827 / NBRC 12203 / NCIMB 8253 / ATH 2.4.1.) (Rhodobacter sphaeroides).